The chain runs to 334 residues: MRIAVDAMGGDHAPAEIVKGALRSIEQFDIEVILVGQPERIKEFLPQGEVPARVRIKEATEVVEMDEHPAQAVRRKKDSSIVVATRLVKEGEADALVSAGSTGAQMAASLLGLGRIKGIDRPAIVTVLPTLEGGKLLLDVGANPDAKPEHLLQYAMMGSIYAESILGIQNPKVGLLNIGTEETKGNELTQATYPLLQKAPLNFIGNVEGRAIPYGQAADVVVCEGFVGNVVLKTTEGLAGALFQLIKEKITATPLRKLGALAIKPGLKEIAKMMDYAEYGGAPLLGVNGISIISHGSSNEKAIFNAIRVAKECVESGFIEEIKKELPRFTAAQE.

This sequence belongs to the PlsX family. Homodimer. Probably interacts with PlsY.

The protein resides in the cytoplasm. It carries out the reaction a fatty acyl-[ACP] + phosphate = an acyl phosphate + holo-[ACP]. It functions in the pathway lipid metabolism; phospholipid metabolism. In terms of biological role, catalyzes the reversible formation of acyl-phosphate (acyl-PO(4)) from acyl-[acyl-carrier-protein] (acyl-ACP). This enzyme utilizes acyl-ACP as fatty acyl donor, but not acyl-CoA. The chain is Phosphate acyltransferase from Desulfitobacterium hafniense (strain DSM 10664 / DCB-2).